We begin with the raw amino-acid sequence, 585 residues long: Arginine--tRNA ligase (585 aa).

The short motif at alanine 131–histidine 141 is the 'HIGH' region element.

Belongs to the class-I aminoacyl-tRNA synthetase family. As to quaternary structure, monomer.

The protein resides in the cytoplasm. It carries out the reaction tRNA(Arg) + L-arginine + ATP = L-arginyl-tRNA(Arg) + AMP + diphosphate. The protein is Arginine--tRNA ligase of Rhizobium etli (strain ATCC 51251 / DSM 11541 / JCM 21823 / NBRC 15573 / CFN 42).